We begin with the raw amino-acid sequence, 91 residues long: Uteroglobin (91 aa).

Residues 1–21 (MKLAITITLAILALCCSPASA) form the signal peptide.

Belongs to the secretoglobin family. As to quaternary structure, antiparallel homodimer; disulfide-linked. Interaction with LMBR1L is controversial. In terms of tissue distribution, club cells (nonciliated cells of the surface epithelium of the pulmonary airways). Expressed in lung, uterus, and prostate.

Its subcellular location is the secreted. Functionally, binds phosphatidylcholine, phosphatidylinositol, polychlorinated biphenyls (PCB) and weakly progesterone, potent inhibitor of phospholipase A2. The chain is Uteroglobin (SCGB1A1) from Equus caballus (Horse).